Reading from the N-terminus, the 281-residue chain is ATP phosphoribosyltransferase (281 aa).

Belongs to the ATP phosphoribosyltransferase family. Long subfamily. The cofactor is Mg(2+).

Its subcellular location is the cytoplasm. The enzyme catalyses 1-(5-phospho-beta-D-ribosyl)-ATP + diphosphate = 5-phospho-alpha-D-ribose 1-diphosphate + ATP. It participates in amino-acid biosynthesis; L-histidine biosynthesis; L-histidine from 5-phospho-alpha-D-ribose 1-diphosphate: step 1/9. Its activity is regulated as follows. Feedback inhibited by histidine. Functionally, catalyzes the condensation of ATP and 5-phosphoribose 1-diphosphate to form N'-(5'-phosphoribosyl)-ATP (PR-ATP). Has a crucial role in the pathway because the rate of histidine biosynthesis seems to be controlled primarily by regulation of HisG enzymatic activity. The polypeptide is ATP phosphoribosyltransferase (Kocuria rhizophila (strain ATCC 9341 / DSM 348 / NBRC 103217 / DC2201)).